The chain runs to 91 residues: Acylphosphatase (91 aa).

The 88-residue stretch at 4 to 91 (RAIVTIKGLV…GEFDDFDVRY (88 aa)) folds into the Acylphosphatase-like domain. Active-site residues include R19 and N37.

This sequence belongs to the acylphosphatase family.

It carries out the reaction an acyl phosphate + H2O = a carboxylate + phosphate + H(+). This chain is Acylphosphatase (acyP), found in Geobacter sulfurreducens (strain ATCC 51573 / DSM 12127 / PCA).